We begin with the raw amino-acid sequence, 226 residues long: 7-cyano-7-deazaguanine synthase (226 aa).

ATP is bound at residue 7–17; the sequence is LSGGMDSLVTT. 4 residues coordinate Zn(2+): Cys-187, Cys-195, Cys-198, and Cys-201.

This sequence belongs to the QueC family. Zn(2+) serves as cofactor.

The catalysed reaction is 7-carboxy-7-deazaguanine + NH4(+) + ATP = 7-cyano-7-deazaguanine + ADP + phosphate + H2O + H(+). It participates in purine metabolism; 7-cyano-7-deazaguanine biosynthesis. Its function is as follows. Catalyzes the ATP-dependent conversion of 7-carboxy-7-deazaguanine (CDG) to 7-cyano-7-deazaguanine (preQ(0)). This is 7-cyano-7-deazaguanine synthase from Chlorobium phaeobacteroides (strain DSM 266 / SMG 266 / 2430).